The primary structure comprises 245 residues: 1-(5-phosphoribosyl)-5-[(5-phosphoribosylamino)methylideneamino] imidazole-4-carboxamide isomerase (245 aa).

Aspartate 8 (proton acceptor) is an active-site residue. Residue aspartate 130 is the Proton donor of the active site.

This sequence belongs to the HisA/HisF family.

It is found in the cytoplasm. The catalysed reaction is 1-(5-phospho-beta-D-ribosyl)-5-[(5-phospho-beta-D-ribosylamino)methylideneamino]imidazole-4-carboxamide = 5-[(5-phospho-1-deoxy-D-ribulos-1-ylimino)methylamino]-1-(5-phospho-beta-D-ribosyl)imidazole-4-carboxamide. It participates in amino-acid biosynthesis; L-histidine biosynthesis; L-histidine from 5-phospho-alpha-D-ribose 1-diphosphate: step 4/9. In Pseudomonas fluorescens (strain Pf0-1), this protein is 1-(5-phosphoribosyl)-5-[(5-phosphoribosylamino)methylideneamino] imidazole-4-carboxamide isomerase.